The sequence spans 1372 residues: uncharacterized protein (1372 aa).

The segment at 1–67 (MEATDQEVML…PPAPSKNPMQ (67 aa)) is disordered. A compositionally biased stretch (polar residues) spans 17 to 28 (MSTSATSSTNGG). Residues 75-143 (NLYQTAQEQL…LEEHDRLRRK (69 aa)) are a coiled coil. Disordered regions lie at residues 178-199 (NDLS…LSGD), 238-287 (HINR…QASS), 380-414 (EVSN…EVRR), 427-447 (QSLE…VPVP), and 486-531 (EERM…DSGI). Low complexity-rich tracts occupy residues 184–198 (GIGT…SLSG) and 238–251 (HINR…HGNG). 2 stretches are compositionally biased toward polar residues: residues 257–287 (TGPS…QASS) and 399–408 (TNGNSATTAP). A coiled-coil region spans residues 409–438 (KSEVRRLSGDISSIRDRMQSLEQQRKAFSS). A compositionally biased stretch (basic and acidic residues) spans 486-499 (EERMRQQQQKEKHS). Over residues 514 to 523 (ALIIEEPPVA) the composition is skewed to low complexity. A coiled-coil region spans residues 539–580 (LQQQQQLNAAIAALALEERQLEEAANAVNQIEAEFDELTDLH). The span at 652 to 673 (VSKSGPTPNPTSTPNMVSSSPN) shows a compositional bias: low complexity. Disordered stretches follow at residues 652–679 (VSKS…LRRK), 799–820 (SRQL…RSEH), 860–897 (SQSD…PKRV), 1151–1181 (SSQM…PIPK), and 1231–1250 (SPPS…SPTK). Polar residues-rich tracts occupy residues 860–871 (SQSDSKSLTSPI) and 1151–1160 (SSQMMKTSLP).

This is an uncharacterized protein from Drosophila melanogaster (Fruit fly).